We begin with the raw amino-acid sequence, 1009 residues long: Chitin synthase 2 (1009 aa).

Composition is skewed to polar residues over residues 1–12 (MSYNNPNNSNSH) and 34–62 (EFLN…LNFQ). 2 disordered regions span residues 1–62 (MSYN…LNFQ) and 175–234 (DESQ…EVRS). Over residues 192–202 (EGEEEEEEGET) the composition is skewed to acidic residues. Helical transmembrane passes span 647–667 (WLNG…KVWT), 682–702 (FFYQ…YFLV), 722–742 (ILSV…FVLS), 757–777 (IVIF…FMAV), 804–823 (LVVA…FLYF), 930–950 (VLVW…TGGF), and 967–987 (AAVF…FRFI).

The protein belongs to the chitin synthase family.

The protein resides in the cell membrane. The enzyme catalyses [(1-&gt;4)-N-acetyl-beta-D-glucosaminyl](n) + UDP-N-acetyl-alpha-D-glucosamine = [(1-&gt;4)-N-acetyl-beta-D-glucosaminyl](n+1) + UDP + H(+). Its function is as follows. Polymerizes chitin, a structural polymer of the cell wall and septum, by transferring the sugar moiety of UDP-GlcNAc to the non-reducing end of the growing chitin polymer. The protein is Chitin synthase 2 (CHS2) of Candida albicans (Yeast).